We begin with the raw amino-acid sequence, 444 residues long: Glutamyl-tRNA reductase (444 aa).

Substrate is bound by residues 49–52 (TCNR), serine 109, 114–116 (ETQ), and glutamine 120. Cysteine 50 (nucleophile) is an active-site residue. Position 189 to 194 (189 to 194 (GAGKMS)) interacts with NADP(+). Positions 425 to 444 (KPKKQPAPAGIKEPVLAKKG) are disordered.

Belongs to the glutamyl-tRNA reductase family. In terms of assembly, homodimer.

The catalysed reaction is (S)-4-amino-5-oxopentanoate + tRNA(Glu) + NADP(+) = L-glutamyl-tRNA(Glu) + NADPH + H(+). It functions in the pathway porphyrin-containing compound metabolism; protoporphyrin-IX biosynthesis; 5-aminolevulinate from L-glutamyl-tRNA(Glu): step 1/2. In terms of biological role, catalyzes the NADPH-dependent reduction of glutamyl-tRNA(Glu) to glutamate 1-semialdehyde (GSA). The protein is Glutamyl-tRNA reductase of Pelotomaculum thermopropionicum (strain DSM 13744 / JCM 10971 / SI).